We begin with the raw amino-acid sequence, 887 residues long: Semaphorin-6B (887 aa).

Residues 1–26 (MWTPRAPPPRPALLFLLLLLLRVTHG) form the signal peptide. At 27–605 (LFPDEPPPLS…VSVNLLVTSS (579 aa)) the chain is on the extracellular side. A Sema domain is found at 32 to 525 (PPPLSVAPRD…FPRCVVRVPV (494 aa)). An N-linked (GlcNAc...) asparagine glycan is attached at asparagine 75. Disulfide bonds link cysteine 117-cysteine 127 and cysteine 145-cysteine 154. Asparagine 156, asparagine 168, and asparagine 292 each carry an N-linked (GlcNAc...) asparagine glycan. 2 cysteine pairs are disulfide-bonded: cysteine 268–cysteine 379 and cysteine 293–cysteine 338. 3 N-linked (GlcNAc...) asparagine glycosylation sites follow: asparagine 387, asparagine 442, and asparagine 463. Disulfide bonds link cysteine 487-cysteine 519, cysteine 528-cysteine 546, cysteine 534-cysteine 580, and cysteine 538-cysteine 554. The helical transmembrane segment at 606 to 626 (VAAFVVGAVVSGFSVGWFVGL) threads the bilayer. Residues 627–887 (RERRELARRK…TGERTAPPVP (261 aa)) lie on the Cytoplasmic side of the membrane. Disordered stretches follow at residues 656 to 675 (LGER…GGPG), 697 to 717 (HGGP…TPLP), and 759 to 887 (APEQ…PPVP). Positions 662-674 (TGTGGRGGAGGGP) are enriched in gly residues. Arginine 667 carries the omega-N-methylarginine modification. Over residues 707 to 717 (LLPTPEQTPLP) the composition is skewed to low complexity.

The protein belongs to the semaphorin family.

It localises to the cell membrane. Its function is as follows. Functions as a cell surface repellent for mossy fibers of developing neurons in the hippocampus where it plays a role in axon guidance. May function through the PLXNA4 receptor expressed by mossy cell axons. The polypeptide is Semaphorin-6B (Sema6b) (Rattus norvegicus (Rat)).